The following is a 400-amino-acid chain: Bifunctional enzyme IspD/IspF (400 aa).

The segment at 1-240 (MQESTMKFGI…EKLSHALPDV (240 aa)) is 2-C-methyl-D-erythritol 4-phosphate cytidylyltransferase. Residues 241–400 (RTGNGYDVHQ…ATVVYQGRPL (160 aa)) form a 2-C-methyl-D-erythritol 2,4-cyclodiphosphate synthase region. A divalent metal cation is bound by residues aspartate 247 and histidine 249. 4-CDP-2-C-methyl-D-erythritol 2-phosphate is bound by residues 247 to 249 (DVH) and 273 to 274 (HS). Residue histidine 281 coordinates a divalent metal cation. 4-CDP-2-C-methyl-D-erythritol 2-phosphate is bound by residues 295 to 297 (DIG), 371 to 374 (TTNE), phenylalanine 378, and arginine 381.

The protein in the N-terminal section; belongs to the IspD/TarI cytidylyltransferase family. IspD subfamily. It in the C-terminal section; belongs to the IspF family. The cofactor is a divalent metal cation.

It catalyses the reaction 2-C-methyl-D-erythritol 4-phosphate + CTP + H(+) = 4-CDP-2-C-methyl-D-erythritol + diphosphate. The catalysed reaction is 4-CDP-2-C-methyl-D-erythritol 2-phosphate = 2-C-methyl-D-erythritol 2,4-cyclic diphosphate + CMP. It functions in the pathway isoprenoid biosynthesis; isopentenyl diphosphate biosynthesis via DXP pathway; isopentenyl diphosphate from 1-deoxy-D-xylulose 5-phosphate: step 2/6. It participates in isoprenoid biosynthesis; isopentenyl diphosphate biosynthesis via DXP pathway; isopentenyl diphosphate from 1-deoxy-D-xylulose 5-phosphate: step 4/6. Its function is as follows. Bifunctional enzyme that catalyzes the formation of 4-diphosphocytidyl-2-C-methyl-D-erythritol from CTP and 2-C-methyl-D-erythritol 4-phosphate (MEP) (IspD), and catalyzes the conversion of 4-diphosphocytidyl-2-C-methyl-D-erythritol 2-phosphate (CDP-ME2P) to 2-C-methyl-D-erythritol 2,4-cyclodiphosphate (ME-CPP) with a corresponding release of cytidine 5-monophosphate (CMP) (IspF). The polypeptide is Bifunctional enzyme IspD/IspF (Agrobacterium fabrum (strain C58 / ATCC 33970) (Agrobacterium tumefaciens (strain C58))).